A 213-amino-acid polypeptide reads, in one-letter code: Adenylate kinase (213 aa).

An ATP-binding site is contributed by Gly10–Thr15. Positions Ser30 to Val59 are NMP. AMP-binding positions include Thr31, Arg36, Asp57–Val59, Gly86–Arg89, and Gln93. The interval Gly127–Asp160 is LID. Residues Arg128 and Thr137–Phe138 contribute to the ATP site. AMP-binding residues include Arg157 and Arg168. Lys196 contacts ATP.

This sequence belongs to the adenylate kinase family. In terms of assembly, monomer.

It localises to the cytoplasm. It carries out the reaction AMP + ATP = 2 ADP. The protein operates within purine metabolism; AMP biosynthesis via salvage pathway; AMP from ADP: step 1/1. In terms of biological role, catalyzes the reversible transfer of the terminal phosphate group between ATP and AMP. Plays an important role in cellular energy homeostasis and in adenine nucleotide metabolism. In Streptococcus equi subsp. equi (strain 4047), this protein is Adenylate kinase.